The following is a 208-amino-acid chain: Protein-L-isoaspartate O-methyltransferase (208 aa).

The active site involves Ser59.

It belongs to the methyltransferase superfamily. L-isoaspartyl/D-aspartyl protein methyltransferase family.

The protein resides in the cytoplasm. It catalyses the reaction [protein]-L-isoaspartate + S-adenosyl-L-methionine = [protein]-L-isoaspartate alpha-methyl ester + S-adenosyl-L-homocysteine. Catalyzes the methyl esterification of L-isoaspartyl residues in peptides and proteins that result from spontaneous decomposition of normal L-aspartyl and L-asparaginyl residues. It plays a role in the repair and/or degradation of damaged proteins. This is Protein-L-isoaspartate O-methyltransferase from Vibrio parahaemolyticus serotype O3:K6 (strain RIMD 2210633).